The primary structure comprises 208 residues: N-(5'-phosphoribosyl)anthranilate isomerase (208 aa).

The protein belongs to the TrpF family.

The catalysed reaction is N-(5-phospho-beta-D-ribosyl)anthranilate = 1-(2-carboxyphenylamino)-1-deoxy-D-ribulose 5-phosphate. Its pathway is amino-acid biosynthesis; L-tryptophan biosynthesis; L-tryptophan from chorismate: step 3/5. This is N-(5'-phosphoribosyl)anthranilate isomerase from Neisseria meningitidis serogroup A / serotype 4A (strain DSM 15465 / Z2491).